A 545-amino-acid polypeptide reads, in one-letter code: Ribulokinase (545 aa).

It belongs to the ribulokinase family.

It carries out the reaction D-ribulose + ATP = D-ribulose 5-phosphate + ADP + H(+). It catalyses the reaction L-ribulose + ATP = L-ribulose 5-phosphate + ADP + H(+). Its pathway is carbohydrate degradation; L-arabinose degradation via L-ribulose; D-xylulose 5-phosphate from L-arabinose (bacterial route): step 2/3. The sequence is that of Ribulokinase from Staphylococcus aureus (strain MSSA476).